A 311-amino-acid polypeptide reads, in one-letter code: Asialoglycoprotein receptor 2 (311 aa).

Positions 1 to 44 (MAKDFQDIQQLSSEENDHPFHQGEGPGTRRLNPRRGNPFLKGPP) are disordered. The Cytoplasmic portion of the chain corresponds to 1 to 58 (MAKDFQDIQQLSSEENDHPFHQGEGPGTRRLNPRRGNPFLKGPPPAQPLAQRLCSMVC). The Endocytosis signal motif lies at 5–8 (FQDI). Ser-13 is modified (phosphoserine). The S-palmitoyl cysteine moiety is linked to residue Cys-54. Residues 59-79 (FSLLALSFNILLLVVICVTGS) form a helical; Signal-anchor for type II membrane protein membrane-spanning segment. Over 80–311 (QSEGHGGAQL…KRRNATGEVA (232 aa)) the chain is Extracellular. N-linked (GlcNAc...) asparagine glycosylation is found at Asn-102 and Asn-170. Positions 176 to 302 (CCPVNWVEHQ…LQVYRWVCEK (127 aa)) constitute a C-type lectin domain. 3 disulfides stabilise this stretch: Cys-177/Cys-188, Cys-205/Cys-300, and Cys-278/Cys-292. Asn-305 is a glycosylation site (N-linked (GlcNAc...) asparagine).

The functioning ligand-binding unit of this receptor is thought to be at least a dimer. Interacts with LASS2. In terms of assembly, (Microbial infection) Interacts with hepatitis E virus capsid protein ORF2. In terms of tissue distribution, expressed exclusively in hepatic parenchymal cells.

It localises to the membrane. Its function is as follows. Mediates the endocytosis of plasma glycoproteins to which the terminal sialic acid residue on their complex carbohydrate moieties has been removed. The receptor recognizes terminal galactose and N-acetylgalactosamine units. After ligand binding to the receptor, the resulting complex is internalized and transported to a sorting organelle, where receptor and ligand are disassociated. The receptor then returns to the cell membrane surface. The sequence is that of Asialoglycoprotein receptor 2 (ASGR2) from Homo sapiens (Human).